The sequence spans 311 residues: Transmembrane protein 177 (311 aa).

Over 1–17 (MAGPLWRTAAFVQRHRT) the chain is Mitochondrial matrix. The helical transmembrane segment at 18-38 (GLLVGSCAGLFGVPISYHLFP) threads the bilayer. Residues 39-166 (DPVVQWLYQY…EVVYLESSTT (128 aa)) are Mitochondrial intermembrane-facing. Residues 167-187 (AVHALLAPACLAGTWALGVGA) traverse the membrane as a helical segment. At 188–197 (KYTLGLHAGP) the chain is on the mitochondrial matrix side. A helical transmembrane segment spans residues 198-218 (MNLRAAFSLVAAVAGFVAYAF). Over 219-311 (SQDSLTHAVE…WRGMLNPGRS (93 aa)) the chain is Mitochondrial intermembrane.

This sequence belongs to the TMEM177 family. As to quaternary structure, found in a complex with COX20, COA6, MT-CO2/COX2, COX18, SCO1 and SCO2. Interacts with COX20. Interacts with COX1, MT-CO2/COX2, SCO1 and SCO2 in a COX20-dependent manner.

The protein resides in the mitochondrion inner membrane. Plays a role in the early steps of cytochrome c oxidase subunit II (MT-CO2/COX2) maturation and is required for the stabilization of COX20 and the newly synthesized MT-CO2/COX2 protein. The polypeptide is Transmembrane protein 177 (TMEM177) (Homo sapiens (Human)).